We begin with the raw amino-acid sequence, 249 residues long: Homeobox protein TGIF2LX (249 aa).

Disordered regions lie at residues 1-65 and 126-199; these read MEAA…GYSP and DPIV…PKKK. The segment covering 9–27 has biased composition (basic and acidic residues); sequence AETRSRVEKDSRRAIKDSP. Polar residues predominate over residues 28-46; that stretch reads AKTQSPAQDTSIMLRNNAD. The segment at residues 55–118 is a DNA-binding region (homeobox; TALE-type); the sequence is EHKKKRKGYS…INARRRILPD (64 aa). Positions 159–172 are enriched in polar residues; that stretch reads DNVQSLPLRSSPKG.

Belongs to the TALE/TGIF homeobox family.

The protein localises to the nucleus. Functionally, may have a transcription role in testis. The protein is Homeobox protein TGIF2LX (TGIF2LX) of Macaca mulatta (Rhesus macaque).